Consider the following 421-residue polypeptide: Serine--tRNA ligase (421 aa).

229–231 serves as a coordination point for L-serine; sequence TSE. 260 to 262 serves as a coordination point for ATP; it reads RRE. Glu283 is an L-serine binding site. An ATP-binding site is contributed by 347 to 350; it reads EISS. Ser381 is a binding site for L-serine.

This sequence belongs to the class-II aminoacyl-tRNA synthetase family. Type-1 seryl-tRNA synthetase subfamily. As to quaternary structure, homodimer. The tRNA molecule binds across the dimer.

Its subcellular location is the cytoplasm. It catalyses the reaction tRNA(Ser) + L-serine + ATP = L-seryl-tRNA(Ser) + AMP + diphosphate + H(+). The enzyme catalyses tRNA(Sec) + L-serine + ATP = L-seryl-tRNA(Sec) + AMP + diphosphate + H(+). It participates in aminoacyl-tRNA biosynthesis; selenocysteinyl-tRNA(Sec) biosynthesis; L-seryl-tRNA(Sec) from L-serine and tRNA(Sec): step 1/1. In terms of biological role, catalyzes the attachment of serine to tRNA(Ser). Is also able to aminoacylate tRNA(Sec) with serine, to form the misacylated tRNA L-seryl-tRNA(Sec), which will be further converted into selenocysteinyl-tRNA(Sec). This Fusobacterium nucleatum subsp. nucleatum (strain ATCC 25586 / DSM 15643 / BCRC 10681 / CIP 101130 / JCM 8532 / KCTC 2640 / LMG 13131 / VPI 4355) protein is Serine--tRNA ligase.